A 341-amino-acid polypeptide reads, in one-letter code: Methionine import ATP-binding protein MetN 2 (341 aa).

Residues 2–241 enclose the ABC transporter domain; sequence ILLENVKKIY…PQQDITKRFV (240 aa). Position 38–45 (38–45) interacts with ATP; sequence GYSGAGKS.

Belongs to the ABC transporter superfamily. Methionine importer (TC 3.A.1.24) family. As to quaternary structure, the complex is composed of two ATP-binding proteins (MetN), two transmembrane proteins (MetI) and a solute-binding protein (MetQ).

It is found in the cell membrane. It catalyses the reaction L-methionine(out) + ATP + H2O = L-methionine(in) + ADP + phosphate + H(+). It carries out the reaction D-methionine(out) + ATP + H2O = D-methionine(in) + ADP + phosphate + H(+). Part of the ABC transporter complex MetNIQ involved in methionine import. Responsible for energy coupling to the transport system. The protein is Methionine import ATP-binding protein MetN 2 of Bacillus thuringiensis subsp. konkukian (strain 97-27).